The sequence spans 203 residues: Urease accessory protein UreG (203 aa).

13–20 (GPVGSGKT) lines the GTP pocket.

It belongs to the SIMIBI class G3E GTPase family. UreG subfamily. As to quaternary structure, homodimer. UreD, UreF and UreG form a complex that acts as a GTP-hydrolysis-dependent molecular chaperone, activating the urease apoprotein by helping to assemble the nickel containing metallocenter of UreC. The UreE protein probably delivers the nickel.

The protein localises to the cytoplasm. Functionally, facilitates the functional incorporation of the urease nickel metallocenter. This process requires GTP hydrolysis, probably effectuated by UreG. This chain is Urease accessory protein UreG, found in Methylobacillus flagellatus (strain ATCC 51484 / DSM 6875 / VKM B-1610 / KT).